The primary structure comprises 496 residues: MAGLPPPNKTPEIKFTKIFINNQFVDSVNGKAYSVINPCTTKKICDVQEGSKADIDKAVQACKLAFKRGTPWRRMDASRRGHLLYRLADLFERDIAYLSSLETLNTGKPYKSAYQDIVHCIQVLRYYAGWADKNMGQNIPVDGDFFSFTKHEPVGICGLIIPWNYPMLMMTWKMAPALSCGNCIVVKPAEQTPLTALYCASLMEEAGFPPGVVNVVPGYGTICGQSISSHLDINKVSFTGSTEVGKLVMQAAGSSNLKRCSLELSGKCPVVVFPDTDLDFAVQQAHEAAFQNMGQCRWSGSRAYVHESIYEEFVKRSVEQATRRKIGDPYELDTEHGPQIDEEQYTKVLDYIKSAQEQGAKLKYGGNKHGDKGGYYIEPTVFSEVSDNMKIAKEEIFGPVQLLMKFRDLDDVIDRCNNSDYGMAAAIFTNDINRIMTFTNAVNTGTIWVNTFHHWFPQAPFGGFKTSGISREMGKYALREYTEVKSVIYRIPQKDS.

The protein belongs to the aldehyde dehydrogenase family. Lens.

Functionally, omega-crystallins are structural components of squids and octopi eye lens. Contains relatively little if any DHAL activity. The protein is Omega-crystallin of Enteroctopus dofleini (North Pacific giant octopus).